The chain runs to 114 residues: Ribulose bisphosphate carboxylase small subunit 2 (114 aa).

The protein belongs to the RuBisCO small chain family. Heterohexadecamer of 8 large and 8 small subunits. Forms a CsoS2-CsoS1-RuBisCO complex.

The protein resides in the carboxysome. Its function is as follows. RuBisCO catalyzes two reactions: the carboxylation of D-ribulose 1,5-bisphosphate, the primary event in carbon dioxide fixation, as well as the oxidative fragmentation of the pentose substrate. Both reactions occur simultaneously and in competition at the same active site. Although the small subunit is not catalytic it is essential for maximal activity. Replacing the endogenous type I ccbLS genes in H.neapolitanus with this carboxysomally targeted enzyme reconstitutes RuBisCO with about 25% of normal activity; the active enzyme is targeted to carboxysomes. The protein is Ribulose bisphosphate carboxylase small subunit 2 of Hydrogenovibrio crunogenus (strain DSM 25203 / XCL-2) (Thiomicrospira crunogena).